The sequence spans 173 residues: Photosystem I assembly protein Ycf3 (173 aa).

3 TPR repeats span residues A35–Q68, G72–Q105, and G120–G153.

It belongs to the Ycf3 family.

The protein localises to the cellular thylakoid membrane. In terms of biological role, essential for the assembly of the photosystem I (PSI) complex. May act as a chaperone-like factor to guide the assembly of the PSI subunits. This is Photosystem I assembly protein Ycf3 from Prochlorococcus marinus (strain NATL1A).